Reading from the N-terminus, the 368-residue chain is Leu/Ile/Val-binding protein homolog 3 (368 aa).

Positions 1–23 (MNLKLLSSVAFAATIGFASAAYA) are cleaved as a signal peptide.

The protein belongs to the leucine-binding protein family.

Functionally, component of an amino-acid transport system. This chain is Leu/Ile/Val-binding protein homolog 3, found in Brucella melitensis biotype 1 (strain ATCC 23456 / CCUG 17765 / NCTC 10094 / 16M).